The primary structure comprises 234 residues: Matrix protein 1 (234 aa).

The tract at residues 1–103 (MHERSKPKTT…QELAEGGIRM (103 aa)) is disordered. The segment covering 76–96 (CDERSTIGRHGNADERPHQEL) has biased composition (basic and acidic residues). The stretch at 183–234 (PEVSFKERMEAEKKKLKELDDKIYKLRRRLRKMEYKKMGINREIDKLEDSVQ) forms a coiled coil.

As to quaternary structure, interacts with host HSC70.

Its subcellular location is the virion. It localises to the host cytoplasm. The protein resides in the host nucleus. May play a role in virus replication, from virus entry and uncoating to assembly and budding of the virus particle. Interaction of viral NEP with M1-Hsc70 is thought to promote nuclear export of the viral encapsidated genomes. The protein is Matrix protein 1 of Infectious salmon anemia virus (isolate Atlantic salmon/Norway/810/9/99) (ISAV).